A 254-amino-acid polypeptide reads, in one-letter code: 5-oxoprolinase subunit A 1 (254 aa).

Belongs to the LamB/PxpA family. In terms of assembly, forms a complex composed of PxpA, PxpB and PxpC.

It catalyses the reaction 5-oxo-L-proline + ATP + 2 H2O = L-glutamate + ADP + phosphate + H(+). In terms of biological role, catalyzes the cleavage of 5-oxoproline to form L-glutamate coupled to the hydrolysis of ATP to ADP and inorganic phosphate. This is 5-oxoprolinase subunit A 1 from Burkholderia pseudomallei (strain K96243).